The primary structure comprises 5073 residues: Malformin synthetase mlfA (5073 aa).

Residues 194–585 form an adenylation 1 region; it reads ERHATNRPHS…CGRADTQVKL (392 aa). Residues 726-799 form the Carrier 1 domain; the sequence is SRLEQEVQLA…EAASLAEVQE (74 aa). Ser760 is subject to O-(pantetheine 4'-phosphoryl)serine. The segment at 837–1268 is condensation 1; the sequence is EDVFPCTTMQ…ALNTLSLLQA (432 aa). The adenylation 2 stretch occupies residues 1296-1685; sequence DRWVTRHPEG…GRKDTQVKLR (390 aa). In terms of domain architecture, Carrier 2 spans 1823 to 1900; the sequence is TPASELERTL…QLAAEVGEPA (78 aa). Ser1860 carries the O-(pantetheine 4'-phosphoryl)serine modification. Disordered regions lie at residues 1901-1930 and 1963-1984; these read GQSA…DGVD and GGSS…SSSK. 2 stretches are compositionally biased toward low complexity: residues 1903–1927 and 1965–1982; these read SASS…STND and SSSN…SSSS. The tract at residues 2031–2446 is condensation 2; that stretch reads EDIYPATALQ…AVSCSDTETL (416 aa). The adenylation 3 stretch occupies residues 2469 to 2861; the sequence is SRTPHAPAVC…IGRRDGQLKL (393 aa). Positions 2997–3073 constitute a Carrier 3 domain; that stretch reads RPKTSQEQEM…QLICHLNSIR (77 aa). The residue at position 3034 (Ser3034) is an O-(pantetheine 4'-phosphoryl)serine. Condensation stretches follow at residues 3090-3555 and 3576-3995; these read WVAL…TYDQ and DIYP…EQLV. The adenylation 4 stretch occupies residues 4020–4410; sequence HASRQAVCAW…VGRKDNQIKF (391 aa). One can recognise a Carrier 4 domain in the interval 4544-4620; that stretch reads MPSTAAERKM…DLGDQARSPN (77 aa). Residue Ser4581 is modified to O-(pantetheine 4'-phosphoryl)serine. The tract at residues 4611–4633 is disordered; the sequence is DLGDQARSPNADNQRVSTASSAG. Positions 4617 to 4631 are enriched in polar residues; it reads RSPNADNQRVSTASS. A condensation 5 region spans residues 4657–4991; that stretch reads DVLPTTSFQR…LQTIVQHQNN (335 aa).

The protein belongs to the NRP synthetase family.

It participates in secondary metabolite biosynthesis. Its function is as follows. Nonribosomal peptide synthetase; part of the gene cluster that mediates the biosynthesis of malformins, cyclic pentapeptides with a disulfide bond between 2 consecutive cysteins, that show potential anti-tumor as well as antimalarial and antitrypanosomal properties. The nonribosomal peptide synthetase mlfA is responsible of the formation of the cyclic pentapeptide. The malformin biosynthesis clusters in malformin-producing fungi also contain enzymes involved in the formation of the disulfide bond between the two consecutive cysteins within malformins, in addition to additional tailoring enzymes such as methyltransferases or oxidoreductases. They are also composed of up to 4 major facilitator superfamily transporters, and transcription factors probably involved in the regulation of the expression of those clusters. This is Malformin synthetase mlfA from Aspergillus tubingensis (strain CBS 134.48).